The sequence spans 292 residues: 33 kDa chaperonin (292 aa).

2 disulfides stabilise this stretch: Cys-230-Cys-232 and Cys-263-Cys-266.

It belongs to the HSP33 family. Post-translationally, under oxidizing conditions two disulfide bonds are formed involving the reactive cysteines. Under reducing conditions zinc is bound to the reactive cysteines and the protein is inactive.

The protein resides in the cytoplasm. Functionally, redox regulated molecular chaperone. Protects both thermally unfolding and oxidatively damaged proteins from irreversible aggregation. Plays an important role in the bacterial defense system toward oxidative stress. The protein is 33 kDa chaperonin of Escherichia coli O17:K52:H18 (strain UMN026 / ExPEC).